The chain runs to 124 residues: Small ribosomal subunit protein uS12 (124 aa).

The tract at residues 8–28 is disordered; the sequence is IRSAREKTDKKTKSPALKSCP. Over residues 10 to 19 the composition is skewed to basic and acidic residues; it reads SAREKTDKKT. 3-methylthioaspartic acid is present on Asp-89.

This sequence belongs to the universal ribosomal protein uS12 family. As to quaternary structure, part of the 30S ribosomal subunit. Contacts proteins S8 and S17. May interact with IF1 in the 30S initiation complex.

Its function is as follows. With S4 and S5 plays an important role in translational accuracy. Functionally, interacts with and stabilizes bases of the 16S rRNA that are involved in tRNA selection in the A site and with the mRNA backbone. Located at the interface of the 30S and 50S subunits, it traverses the body of the 30S subunit contacting proteins on the other side and probably holding the rRNA structure together. The combined cluster of proteins S8, S12 and S17 appears to hold together the shoulder and platform of the 30S subunit. The polypeptide is Small ribosomal subunit protein uS12 (Arthrospira platensis (Spirulina platensis)).